The following is a 624-amino-acid chain: Coagulation factor XI (624 aa).

The N-terminal stretch at 1–18 is a signal peptide; that stretch reads MTSLHQVLYFIFFASVSS. Apple domains follow at residues 20 to 103, 110 to 193, 200 to 283, and 291 to 376; these read CVTK…FKQC, CSKD…LKSC, CIRD…LQHC, and CHPS…LRLC. Disulfide bonds link cysteine 20–cysteine 103, cysteine 46–cysteine 76, cysteine 50–cysteine 56, cysteine 110–cysteine 193, cysteine 136–cysteine 165, cysteine 140–cysteine 146, cysteine 200–cysteine 283, cysteine 226–cysteine 255, cysteine 230–cysteine 236, cysteine 291–cysteine 376, cysteine 317–cysteine 348, cysteine 321–cysteine 327, cysteine 382–cysteine 499, cysteine 415–cysteine 431, cysteine 513–cysteine 580, cysteine 544–cysteine 559, and cysteine 570–cysteine 598. N-linked (GlcNAc...) asparagine glycans are attached at residues asparagine 90 and asparagine 126. N-linked (GlcNAc...) asparagine glycosylation is present at asparagine 297. Residues 390–622 enclose the Peptidase S1 domain; it reads VVGGAASVHG…YVDWILEKTQ (233 aa). The active-site Charge relay system is the histidine 430. An N-linked (GlcNAc...) asparagine glycan is attached at asparagine 449. Aspartate 479 (charge relay system) is an active-site residue. Asparagine 490 is a glycosylation site (N-linked (GlcNAc...) asparagine). 547-550 serves as a coordination point for heparin; sequence RYRR. Serine 574 acts as the Charge relay system in catalysis.

It belongs to the peptidase S1 family. Plasma kallikrein subfamily. As to quaternary structure, homodimer; disulfide-linked. After activation the heavy and light chains are also linked by a disulfide bond. Interacts (activated) with F9 (inactive and activated) in calcium-dependent manner. Forms a heterodimer with SERPINA5. In terms of processing, activated by factor XIIa (or XII), which cleaves each polypeptide after Arg-389 into the light chain, which contains the active site, and the heavy chain, which associates with high molecular weight (HMW) kininogen. Activated by F12 (activated); the presence of negatively charged surfaces accelerates activation. Activated by F2 (thrombin); the presence of negatively charged surfaces, such as polyphosphate and dextran sulfate, strongly accelerates activation. Autoactivated; the presence of negatively charged surfaces, such as polyphosphate and dextran sulfate, accelerates autoactivation and autolysis. Post-translationally, N-glycosylated on both chains. N-glycosylated sites mainly consist of nonfucosylated sialylated biantennary (in high abundance) and/or triantennary (in low abundance) complex structures.

The protein localises to the secreted. The catalysed reaction is Selective cleavage of Arg-|-Ala and Arg-|-Val bonds in factor IX to form factor IXa.. Its activity is regulated as follows. Inhibited by SERPINA5. In terms of biological role, factor XI triggers the middle phase of the intrinsic pathway of blood coagulation by activating factor IX. This chain is Coagulation factor XI (F11), found in Mus musculus (Mouse).